Here is a 189-residue protein sequence, read N- to C-terminus: UPF0149 protein VFMJ11_2207 (189 aa).

It belongs to the UPF0149 family.

This Aliivibrio fischeri (strain MJ11) (Vibrio fischeri) protein is UPF0149 protein VFMJ11_2207.